The sequence spans 449 residues: MGQSVRNQSTIGYIRETATKFLDRETAGGIFLIIATIVALLLANSQWAGAYHHFLGDELLFEFSEHLSFGLTIEEWINDGLMAIFFLVAGLELKREVMVGELSSIKKASAPLLAALGGMAVPALIFISLNLGTENIKGWGIPMATDIAYSLGIIGLLGKNVPRQLKTFLIALAIADDIGAILVIALFYSNELSWIYLGSGMGAFGLLLLMNWTGVKNLIWYIIIGIILWYCFLNSGIHPTIAGVLFAITIPIVPKLDSKILKERTATNVTNLEKTELEKLNPLQDKKQQIILKAIKTDTENSRPPLLKLENSLVDFNAFFIIPIFAVANAGVKLDVNLIEVVSGSLGLGILLGLAIGKVTGIGIFTLIGQKLGVSELHITLNWKHIIGIGMIAGIGFTMSLFITNLAFNDQELIKISKISILIASLLAAIGGAVILLLTSNKGRKNIVK.

Helical transmembrane passes span Ile30–Ala50, Phe69–Ala89, Leu112–Gly132, Gly138–Gly158, Phe168–Tyr188, Leu192–Trp212, Leu218–His238, Ile241–Leu261, Ser312–Val332, Leu348–Ile368, Ile386–Leu406, and Ile419–Thr439.

This sequence belongs to the NhaA Na(+)/H(+) (TC 2.A.33) antiporter family.

It localises to the cell inner membrane. It carries out the reaction Na(+)(in) + 2 H(+)(out) = Na(+)(out) + 2 H(+)(in). Its function is as follows. Na(+)/H(+) antiporter that extrudes sodium in exchange for external protons. The protein is Na(+)/H(+) antiporter NhaA of Christiangramia forsetii (strain DSM 17595 / CGMCC 1.15422 / KT0803) (Gramella forsetii).